The sequence spans 556 residues: Formate--tetrahydrofolate ligase (556 aa).

65–72 (TPAGEGKS) contributes to the ATP binding site.

Belongs to the formate--tetrahydrofolate ligase family.

It carries out the reaction (6S)-5,6,7,8-tetrahydrofolate + formate + ATP = (6R)-10-formyltetrahydrofolate + ADP + phosphate. It participates in one-carbon metabolism; tetrahydrofolate interconversion. This chain is Formate--tetrahydrofolate ligase, found in Streptococcus pneumoniae (strain Hungary19A-6).